Here is a 161-residue protein sequence, read N- to C-terminus: Nucleotide-binding protein Bcep18194_A5887 (161 aa).

It belongs to the YajQ family.

Nucleotide-binding protein. This chain is Nucleotide-binding protein Bcep18194_A5887, found in Burkholderia lata (strain ATCC 17760 / DSM 23089 / LMG 22485 / NCIMB 9086 / R18194 / 383).